The sequence spans 300 residues: Delta(7)-sterol 5(6)-desaturase erg31 (300 aa).

3 helical membrane-spanning segments follow: residues 33–53, 78–98, and 117–137; these read ISLFFLTWFGGMFLYLTFASL, VLTALQNLPGMALLTVPWFLA, and YFLCSLPLFVMFSDFGIYWAH. The region spanning 123-248 is the Fatty acid hydroxylase domain; it reads PLFVMFSDFG…FTTLFDRLGN (126 aa). The Histidine box-1 signature appears at 137-141; that stretch reads HRFLH. The Histidine box-2 motif lies at 150–154; that stretch reads HKLHH. A helical membrane pass occupies residues 180–200; it reads HLFPFFFPLHKLTYLALFTFV. A Histidine box-3 motif is present at residues 225–229; sequence HNGHH.

This sequence belongs to the sterol desaturase family. The cofactor is Fe cation.

It is found in the endoplasmic reticulum membrane. It carries out the reaction episterol + 2 Fe(II)-[cytochrome b5] + O2 + 2 H(+) = 5-dehydroepisterol + 2 Fe(III)-[cytochrome b5] + 2 H2O. It functions in the pathway steroid metabolism; ergosterol biosynthesis. C-5 sterol desaturase; part of the third module of ergosterol biosynthesis pathway that includes by the late steps of the pathway. Erg31 and erg32 catalyze the introduction of a C-5 double bond in the B ring to produce 5-dehydroepisterol. The third module or late pathway involves the ergosterol synthesis itself through consecutive reactions that mainly occur in the endoplasmic reticulum (ER) membrane. Firstly, the squalene synthase erg9 catalyzes the condensation of 2 farnesyl pyrophosphate moieties to form squalene, which is the precursor of all steroids. Secondly, squalene is converted into lanosterol by the consecutive action of the squalene epoxidase erg1 and the lanosterol synthase erg7. The lanosterol 14-alpha-demethylase erg11/cyp1 catalyzes C14-demethylation of lanosterol to produce 4,4'-dimethyl cholesta-8,14,24-triene-3-beta-ol. In the next steps, a complex process involving various demethylation, reduction and desaturation reactions catalyzed by the C-14 reductase erg24 and the C-4 demethylation complex erg25-erg26-erg27 leads to the production of zymosterol. Erg28 likely functions in the C-4 demethylation complex reaction by tethering erg26 and Erg27 to the endoplasmic reticulum or to facilitate interaction between these proteins. Then, the sterol 24-C-methyltransferase erg6 catalyzes the methyl transfer from S-adenosyl-methionine to the C-24 of zymosterol to form fecosterol. The C-8 sterol isomerase erg2 catalyzes the reaction which results in unsaturation at C-7 in the B ring of sterols and thus converts fecosterol to episterol. The sterol-C5-desaturases erg31 and erg32 then catalyze the introduction of a C-5 double bond in the B ring to produce 5-dehydroepisterol. The C-22 sterol desaturase erg5 further converts 5-dehydroepisterol into ergosta-5,7,22,24(28)-tetraen-3beta-ol by forming the C-22(23) double bond in the sterol side chain. Finally, ergosta-5,7,22,24(28)-tetraen-3beta-ol is substrate of the C-24(28) sterol reductase erg4 to produce ergosterol. In the genus Schizosaccharomyces, a second route exists between lanosterol and fecosterol, via the methylation of lanosterol to eburicol by erg6, followed by C14-demethylation by erg11/cyp1 and C4-demethylation by the demethylation complex erg25-erg26-erg27. The sequence is that of Delta(7)-sterol 5(6)-desaturase erg31 from Schizosaccharomyces pombe (strain 972 / ATCC 24843) (Fission yeast).